Here is a 191-residue protein sequence, read N- to C-terminus: Fe/S biogenesis protein NfuA (191 aa).

Residues Cys-149 and Cys-152 each contribute to the [4Fe-4S] cluster site.

Belongs to the NfuA family. Homodimer. Requires [4Fe-4S] cluster as cofactor.

Functionally, involved in iron-sulfur cluster biogenesis. Binds a 4Fe-4S cluster, can transfer this cluster to apoproteins, and thereby intervenes in the maturation of Fe/S proteins. Could also act as a scaffold/chaperone for damaged Fe/S proteins. The sequence is that of Fe/S biogenesis protein NfuA from Sodalis glossinidius (strain morsitans).